A 413-amino-acid chain; its full sequence is Gamma-glutamyl phosphate reductase (413 aa).

This sequence belongs to the gamma-glutamyl phosphate reductase family.

The protein resides in the cytoplasm. The enzyme catalyses L-glutamate 5-semialdehyde + phosphate + NADP(+) = L-glutamyl 5-phosphate + NADPH + H(+). It participates in amino-acid biosynthesis; L-proline biosynthesis; L-glutamate 5-semialdehyde from L-glutamate: step 2/2. In terms of biological role, catalyzes the NADPH-dependent reduction of L-glutamate 5-phosphate into L-glutamate 5-semialdehyde and phosphate. The product spontaneously undergoes cyclization to form 1-pyrroline-5-carboxylate. The protein is Gamma-glutamyl phosphate reductase of Leuconostoc mesenteroides subsp. mesenteroides (strain ATCC 8293 / DSM 20343 / BCRC 11652 / CCM 1803 / JCM 6124 / NCDO 523 / NBRC 100496 / NCIMB 8023 / NCTC 12954 / NRRL B-1118 / 37Y).